The sequence spans 226 residues: MTAKLERLQRALGYTFKEPALLTLALTHRSFGGRNNERLEFLGDSVLNFIIADYLFGRFEEAREGQLSRLRARMVKGVTLAEIAREFDLGEYLRLGSGEMKSGGFRRESILADALESIIGAIYLDAGFEVCADRVLNWFEARLQKLNLKDTQKDSKTRLQEYLQARQLNLPRYEVISVQGEAHAQTFHVRCEIDGLSDATEGTGSSRRVAEQKAAKQALLALGVDQ.

An RNase III domain is found at 5 to 127 (LERLQRALGY…IIGAIYLDAG (123 aa)). E40 contributes to the Mg(2+) binding site. D44 is a catalytic residue. D113 and E116 together coordinate Mg(2+). E116 is an active-site residue. A DRBM domain is found at 154-224 (DSKTRLQEYL…AKQALLALGV (71 aa)).

The protein belongs to the ribonuclease III family. In terms of assembly, homodimer. Requires Mg(2+) as cofactor.

The protein localises to the cytoplasm. The enzyme catalyses Endonucleolytic cleavage to 5'-phosphomonoester.. Functionally, digests double-stranded RNA. Involved in the processing of primary rRNA transcript to yield the immediate precursors to the large and small rRNAs (23S and 16S). Processes some mRNAs, and tRNAs when they are encoded in the rRNA operon. Processes pre-crRNA and tracrRNA of type II CRISPR loci if present in the organism. In Hahella chejuensis (strain KCTC 2396), this protein is Ribonuclease 3.